The sequence spans 111 residues: T cell receptor beta variable 29-1 (111 aa).

An N-terminal signal peptide occupies residues 1–16; it reads MLSLLLLLLGLGSVFS. Residues 17–111 form the Ig-like domain; it reads AVISQKPSRD…DSSIYLCSVE (95 aa). A disulfide bond links cysteine 38 and cysteine 108. Residue asparagine 87 is glycosylated (N-linked (GlcNAc...) asparagine).

Alpha-beta TR is a heterodimer composed of an alpha and beta chain; disulfide-linked. The alpha-beta TR is associated with the transmembrane signaling CD3 coreceptor proteins to form the TR-CD3 (TcR or TCR). The assembly of alpha-beta TR heterodimers with CD3 occurs in the endoplasmic reticulum where a single alpha-beta TR heterodimer associates with one CD3D-CD3E heterodimer, one CD3G-CD3E heterodimer and one CD247 homodimer forming a stable octameric structure. CD3D-CD3E and CD3G-CD3E heterodimers preferentially associate with TR alpha and TR beta chains, respectively. The association of the CD247 homodimer is the last step of TcR assembly in the endoplasmic reticulum and is required for transport to the cell surface.

The protein resides in the cell membrane. V region of the variable domain of T cell receptor (TR) beta chain that participates in the antigen recognition. Alpha-beta T cell receptors are antigen specific receptors which are essential to the immune response and are present on the cell surface of T lymphocytes. Recognize peptide-major histocompatibility (MH) (pMH) complexes that are displayed by antigen presenting cells (APC), a prerequisite for efficient T cell adaptive immunity against pathogens. Binding of alpha-beta TR to pMH complex initiates TR-CD3 clustering on the cell surface and intracellular activation of LCK that phosphorylates the ITAM motifs of CD3G, CD3D, CD3E and CD247 enabling the recruitment of ZAP70. In turn ZAP70 phosphorylates LAT, which recruits numerous signaling molecules to form the LAT signalosome. The LAT signalosome propagates signal branching to three major signaling pathways, the calcium, the mitogen-activated protein kinase (MAPK) kinase and the nuclear factor NF-kappa-B (NF-kB) pathways, leading to the mobilization of transcription factors that are critical for gene expression and essential for T cell growth and differentiation. The T cell repertoire is generated in the thymus, by V-(D)-J rearrangement. This repertoire is then shaped by intrathymic selection events to generate a peripheral T cell pool of self-MH restricted, non-autoaggressive T cells. Post-thymic interaction of alpha-beta TR with the pMH complexes shapes TR structural and functional avidity. This chain is T cell receptor beta variable 29-1, found in Homo sapiens (Human).